The primary structure comprises 421 residues: Mitochondrial distribution and morphology protein 10 (421 aa).

The protein belongs to the MDM10 family. In terms of assembly, component of the ER-mitochondria encounter structure (ERMES) or MDM complex, composed of MMM1, MDM10, MDM12 and MDM34. Associates with the mitochondrial outer membrane sorting assembly machinery SAM(core) complex.

It localises to the mitochondrion outer membrane. Its function is as follows. Component of the ERMES/MDM complex, which serves as a molecular tether to connect the endoplasmic reticulum and mitochondria. Components of this complex are involved in the control of mitochondrial shape and protein biogenesis and may function in phospholipid exchange. MDM10 is involved in the late assembly steps of the general translocase of the mitochondrial outer membrane (TOM complex). Functions in the TOM40-specific route of the assembly of outer membrane beta-barrel proteins, including the association of TOM40 with the receptor TOM22 and small TOM proteins. Can associate with the SAM(core) complex as well as the MDM12-MMM1 complex, both involved in late steps of the major beta-barrel assembly pathway, that is responsible for biogenesis of all outer membrane beta-barrel proteins. May act as a switch that shuttles between both complexes and channels precursor proteins into the TOM40-specific pathway. Plays a role in mitochondrial morphology and in the inheritance of mitochondria. This is Mitochondrial distribution and morphology protein 10 from Vanderwaltozyma polyspora (strain ATCC 22028 / DSM 70294 / BCRC 21397 / CBS 2163 / NBRC 10782 / NRRL Y-8283 / UCD 57-17) (Kluyveromyces polysporus).